The primary structure comprises 546 residues: Choline oxidase (546 aa).

FAD contacts are provided by residues 23–24, Glu44, Trp71, 90–92, 96–103, Ala232, and Tyr465; these read SA, AKV, and CSSHNSCI. The residue at position 99 (His99) is a Tele-8alpha-FAD histidine. The Proton acceptor role is filled by His466. FAD contacts are provided by residues Ala500 and 510–512; that span reads NPN.

The protein belongs to the GMC oxidoreductase family. In terms of assembly, homodimer. The cofactor is FAD.

It carries out the reaction choline + 2 O2 + H2O = glycine betaine + 2 H2O2 + H(+). It functions in the pathway amine and polyamine biosynthesis; betaine biosynthesis via choline pathway; betaine from choline: step 1/1. Functionally, catalyzes the two-step oxidative conversion of choline to glycine-betaine with betaine aldehyde as an intermediate. Glycine-betaine accumulates to high levels in the cytoplasm of cells to prevent dehydration and plasmolysis in adverse hyperosmotic environments. Accepts either choline or the reaction intermediate betaine-aldehyde as substrate. The protein is Choline oxidase (codA) of Arthrobacter globiformis.